A 1025-amino-acid chain; its full sequence is Beta-galactosidase (1025 aa).

Glu482 functions as the Proton donor in the catalytic mechanism. The active-site Nucleophile is the Glu551.

The protein belongs to the glycosyl hydrolase 2 family.

The enzyme catalyses Hydrolysis of terminal non-reducing beta-D-galactose residues in beta-D-galactosides.. The protein is Beta-galactosidase (LAC4) of Kluyveromyces lactis (strain ATCC 8585 / CBS 2359 / DSM 70799 / NBRC 1267 / NRRL Y-1140 / WM37) (Yeast).